The primary structure comprises 382 residues: Probable trehalose-phosphate phosphatase 2 (382 aa).

Belongs to the trehalose phosphatase family. The cofactor is a divalent metal cation. In terms of tissue distribution, expressed in roots and shoots.

The catalysed reaction is alpha,alpha-trehalose 6-phosphate + H2O = alpha,alpha-trehalose + phosphate. It participates in glycan biosynthesis; trehalose biosynthesis. Its function is as follows. Removes the phosphate from trehalose 6-phosphate to produce free trehalose. Trehalose accumulation in plant may improve abiotic stress tolerance. This chain is Probable trehalose-phosphate phosphatase 2 (TPP2), found in Oryza sativa subsp. japonica (Rice).